A 249-amino-acid chain; its full sequence is Pyridoxine 5'-phosphate synthase (249 aa).

Asn7 contacts 3-amino-2-oxopropyl phosphate. 9–10 (DH) contacts 1-deoxy-D-xylulose 5-phosphate. Arg18 serves as a coordination point for 3-amino-2-oxopropyl phosphate. The Proton acceptor role is filled by His43. Residues Arg45 and His50 each coordinate 1-deoxy-D-xylulose 5-phosphate. Catalysis depends on Glu70, which acts as the Proton acceptor. 1-deoxy-D-xylulose 5-phosphate is bound at residue Thr100. His190 acts as the Proton donor in catalysis. Residues Gly191 and 212–213 (GH) contribute to the 3-amino-2-oxopropyl phosphate site.

It belongs to the PNP synthase family. As to quaternary structure, homooctamer; tetramer of dimers.

Its subcellular location is the cytoplasm. It catalyses the reaction 3-amino-2-oxopropyl phosphate + 1-deoxy-D-xylulose 5-phosphate = pyridoxine 5'-phosphate + phosphate + 2 H2O + H(+). It functions in the pathway cofactor biosynthesis; pyridoxine 5'-phosphate biosynthesis; pyridoxine 5'-phosphate from D-erythrose 4-phosphate: step 5/5. Catalyzes the complicated ring closure reaction between the two acyclic compounds 1-deoxy-D-xylulose-5-phosphate (DXP) and 3-amino-2-oxopropyl phosphate (1-amino-acetone-3-phosphate or AAP) to form pyridoxine 5'-phosphate (PNP) and inorganic phosphate. The sequence is that of Pyridoxine 5'-phosphate synthase from Synechococcus sp. (strain CC9311).